The primary structure comprises 269 residues: MSKVIKKRVETSPRPTASSDSLQTCAGVIEYAKSISKSNAKCIEYVTLNASQYANCSSISIKLTDSLSSQMTSTFIMLEGETKLYKNKSKQDRSDGYFLKIKVTAASPMLYQLLEAVYGNIKHKERIPNSLHSLSVETITEKTFKDESIFINKLNGAMVEYVSAGESSILRSIEGELESLSKRERQLAKAIITPIVFYRSGTETKITFALKKLIIDREVVANVIGLSGDSERVSMTENVEEDLARNLGLVDIDDEYDEDSDKEKPIFNV.

It belongs to the orthopoxvirus OPG079 family. Homoomultimer (Potential). Interacts with the small subunit of ribonucleotide reductase. Interacts with host FAM111A; this interaction protomtes OPG079 degradation through autophagy.

The protein localises to the host cytoplasm. In terms of biological role, plays an essential role in viral DNA replication. Binds to ssDNA with high affinity and localizes to cytoplasmic factories where nascent viral genomes accumulate. May disrupt loops, hairpins and other secondary structures present on ssDNA to reduce and eliminate pausing of viral DNA polymerase at specific sites during elongation. This is Protein OPG079 (OPG079) from Vaccinia virus (strain Copenhagen) (VACV).